Consider the following 322-residue polypeptide: 4-hydroxythreonine-4-phosphate dehydrogenase (322 aa).

His131 and Thr132 together coordinate substrate. The a divalent metal cation site is built by His161, His206, and His259. The substrate site is built by Lys267, Asn276, and Arg285.

The protein belongs to the PdxA family. Homodimer. A divalent metal cation serves as cofactor.

It is found in the cytoplasm. It carries out the reaction 4-(phosphooxy)-L-threonine + NAD(+) = 3-amino-2-oxopropyl phosphate + CO2 + NADH. It functions in the pathway cofactor biosynthesis; pyridoxine 5'-phosphate biosynthesis; pyridoxine 5'-phosphate from D-erythrose 4-phosphate: step 4/5. Its function is as follows. Catalyzes the NAD(P)-dependent oxidation of 4-(phosphooxy)-L-threonine (HTP) into 2-amino-3-oxo-4-(phosphooxy)butyric acid which spontaneously decarboxylates to form 3-amino-2-oxopropyl phosphate (AHAP). This Sulfurihydrogenibium sp. (strain YO3AOP1) protein is 4-hydroxythreonine-4-phosphate dehydrogenase.